A 206-amino-acid polypeptide reads, in one-letter code: Large ribosomal subunit protein uL4 (206 aa).

The span at 42–54 (RRQQGTHQSQGRS) shows a compositional bias: polar residues. Positions 42-93 (RRQQGTHQSQGRSDVSRTGAKMFKQKGTGRARHSSARAPQFRGGGKAHGPVV) are disordered. Basic residues predominate over residues 64–76 (FKQKGTGRARHSS).

The protein belongs to the universal ribosomal protein uL4 family. In terms of assembly, part of the 50S ribosomal subunit.

In terms of biological role, one of the primary rRNA binding proteins, this protein initially binds near the 5'-end of the 23S rRNA. It is important during the early stages of 50S assembly. It makes multiple contacts with different domains of the 23S rRNA in the assembled 50S subunit and ribosome. Its function is as follows. Forms part of the polypeptide exit tunnel. The chain is Large ribosomal subunit protein uL4 from Bartonella henselae (strain ATCC 49882 / DSM 28221 / CCUG 30454 / Houston 1) (Rochalimaea henselae).